A 155-amino-acid chain; its full sequence is MQNLEGSGDGQQVEMWTDGACKGNPGPGGWGVLMRAGQHEKTMHGGERQTTNNRMELMAVIEGLRALKRPCRVTIHTDSQYVMKGMTEWLANWKRRGWRTADKKPVKNVELWQALDEQVGRHQVQWRWVRGHAGDPGNERADALANQGMEAARGR.

Residues 9-150 (DGQQVEMWTD…ADALANQGME (142 aa)) form the RNase H type-1 domain. Mg(2+) is bound by residues Asp-18, Glu-56, Asp-78, and Asp-142.

Belongs to the RNase H family. Monomer. It depends on Mg(2+) as a cofactor.

The protein localises to the cytoplasm. The catalysed reaction is Endonucleolytic cleavage to 5'-phosphomonoester.. Endonuclease that specifically degrades the RNA of RNA-DNA hybrids. The protein is Ribonuclease H of Bordetella pertussis (strain Tohama I / ATCC BAA-589 / NCTC 13251).